The chain runs to 75 residues: MQVKKIKKRKKVNFFQKNNIKYIDYKDVELLKKFISPNGQILPRRITGTSLKDQRQLALAIKRARQMALLPYVIE.

It belongs to the bacterial ribosomal protein bS18 family. In terms of assembly, part of the 30S ribosomal subunit. Forms a tight heterodimer with protein bS6.

Binds as a heterodimer with protein bS6 to the central domain of the 16S rRNA, where it helps stabilize the platform of the 30S subunit. In Mycoplasma capricolum subsp. capricolum (strain California kid / ATCC 27343 / NCTC 10154), this protein is Small ribosomal subunit protein bS18.